The chain runs to 185 residues: Ribosome maturation factor RimM (185 aa).

The 80-residue stretch at 105–184 (KDEYYWKDII…IVVVDWEIYK (80 aa)) folds into the PRC barrel domain.

This sequence belongs to the RimM family. In terms of assembly, binds ribosomal protein uS19.

Its subcellular location is the cytoplasm. An accessory protein needed during the final step in the assembly of 30S ribosomal subunit, possibly for assembly of the head region. Essential for efficient processing of 16S rRNA. May be needed both before and after RbfA during the maturation of 16S rRNA. It has affinity for free ribosomal 30S subunits but not for 70S ribosomes. This Blochmanniella floridana protein is Ribosome maturation factor RimM.